The sequence spans 264 residues: tRNA pseudouridine synthase A (264 aa).

Asp-51 serves as the catalytic Nucleophile. Substrate is bound at residue Tyr-109.

It belongs to the tRNA pseudouridine synthase TruA family. In terms of assembly, homodimer.

It carries out the reaction uridine(38/39/40) in tRNA = pseudouridine(38/39/40) in tRNA. In terms of biological role, formation of pseudouridine at positions 38, 39 and 40 in the anticodon stem and loop of transfer RNAs. In Staphylococcus aureus (strain MRSA252), this protein is tRNA pseudouridine synthase A.